A 286-amino-acid polypeptide reads, in one-letter code: 33 kDa chaperonin (286 aa).

2 cysteine pairs are disulfide-bonded: C233–C235 and C267–C270.

This sequence belongs to the HSP33 family. Post-translationally, under oxidizing conditions two disulfide bonds are formed involving the reactive cysteines. Under reducing conditions zinc is bound to the reactive cysteines and the protein is inactive.

The protein resides in the cytoplasm. Functionally, redox regulated molecular chaperone. Protects both thermally unfolding and oxidatively damaged proteins from irreversible aggregation. Plays an important role in the bacterial defense system toward oxidative stress. The polypeptide is 33 kDa chaperonin (Histophilus somni (strain 129Pt) (Haemophilus somnus)).